The following is a 456-amino-acid chain: Glycine--tRNA ligase (456 aa).

2 residues coordinate substrate: Arg-98 and Glu-168. Residues 200–202 (RNE), 210–215 (FRTREF), 285–286 (EL), and 329–332 (GVER) each bind ATP. 215 to 219 (FEQME) provides a ligand contact to substrate. A substrate-binding site is contributed by 325–329 (EPSVG).

Belongs to the class-II aminoacyl-tRNA synthetase family. In terms of assembly, homodimer.

It localises to the cytoplasm. The catalysed reaction is tRNA(Gly) + glycine + ATP = glycyl-tRNA(Gly) + AMP + diphosphate. In terms of biological role, catalyzes the attachment of glycine to tRNA(Gly). This chain is Glycine--tRNA ligase, found in Mycoplasma mycoides subsp. mycoides SC (strain CCUG 32753 / NCTC 10114 / PG1).